The chain runs to 1167 residues: RNA-directed RNA polymerase (1167 aa).

Positions 553–735 (LTYGILAEAT…KALASYTGLE (183 aa)) constitute a RdRp catalytic domain.

It belongs to the reoviridae RNA-directed RNA polymerase family. Interacts with VP3 (Potential). Interacts with VP2 (Potential). Interacts with NSP5; this interaction is probably necessary for the formation of functional virus factories.

Its subcellular location is the virion. The catalysed reaction is RNA(n) + a ribonucleoside 5'-triphosphate = RNA(n+1) + diphosphate. In terms of biological role, RNA-directed RNA polymerase that is involved in both transcription and genome replication. Together with VP3 capping enzyme, forms an enzyme complex positioned near the channels situated at each of the five-fold vertices of the core. Following infection, the outermost layer of the virus is lost, leaving a double-layered particle (DLP) made up of the core and VP6 shell. VP1 then catalyzes the transcription of fully conservative plus-strand genomic RNAs that are extruded through the DLP's channels into the cytoplasm where they function as mRNAs for translation of viral proteins. One copy of each of the viral (+)RNAs is also recruited during core assembly, together with newly synthesized polymerase complexes and VP2. The polymerase of these novo-formed particles catalyzes the synthesis of complementary minus-strands leading to dsDNA formation. To do so, the polymerase specifically recognizes conserved 3' sequence(s) in plus-strand RNA templates. Once dsRNA synthesis is complete, the polymerase switches to the transcriptional mode, thus providing secondary transcription. The chain is RNA-directed RNA polymerase from Rotavirus X (isolate RVX/Human/Bangladesh/NADRV-B219/2002/GXP[X]) (RV ADRV-N).